Consider the following 252-residue polypeptide: Oil body-associated protein 2A (252 aa).

Residues 1 to 31 (MASSDGKPLPTPASVGGGGGSSTAPPGQPTT) are disordered. Over residues 22 to 31 (STAPPGQPTT) the composition is skewed to low complexity.

The protein belongs to the OBAP family.

In Zea mays (Maize), this protein is Oil body-associated protein 2A.